The chain runs to 144 residues: Transcriptional regulator SlyA (144 aa).

One can recognise an HTH marR-type domain in the interval 2-135; the sequence is ESPLGSDLSR…LSQMISKLEK (134 aa). The H-T-H motif DNA-binding region spans 49–72; the sequence is QIQLAKAIGIEQPSLVRTLDQLEE.

This sequence belongs to the SlyA family. In terms of assembly, homodimer.

In terms of biological role, transcription regulator that can specifically activate or repress expression of target genes. This chain is Transcriptional regulator SlyA, found in Wigglesworthia glossinidia brevipalpis.